The primary structure comprises 226 residues: Ribonuclease 3 (226 aa).

The 123-residue stretch at 5 to 127 (LERLQRALGY…IIGAIYLDAG (123 aa)) folds into the RNase III domain. Glutamate 40 provides a ligand contact to Mg(2+). Aspartate 44 is an active-site residue. Mg(2+)-binding residues include aspartate 113 and glutamate 116. Glutamate 116 is an active-site residue. In terms of domain architecture, DRBM spans 154 to 224 (DSKTRLQEYL…AKQALLALGV (71 aa)).

It belongs to the ribonuclease III family. As to quaternary structure, homodimer. Requires Mg(2+) as cofactor.

The protein localises to the cytoplasm. It carries out the reaction Endonucleolytic cleavage to 5'-phosphomonoester.. Functionally, digests double-stranded RNA. Involved in the processing of primary rRNA transcript to yield the immediate precursors to the large and small rRNAs (23S and 16S). Processes some mRNAs, and tRNAs when they are encoded in the rRNA operon. Processes pre-crRNA and tracrRNA of type II CRISPR loci if present in the organism. This chain is Ribonuclease 3, found in Hahella chejuensis (strain KCTC 2396).